Here is a 636-residue protein sequence, read N- to C-terminus: Chaperone protein DnaK (636 aa).

A Phosphothreonine; by autocatalysis modification is found at Thr198. A compositionally biased stretch (low complexity) spans 602–613 (QPAGEEQAGAAA). The segment at 602–636 (QPAGEEQAGAAAHEGEAKGEKVVDADFEEVKEDKK) is disordered. The segment covering 614 to 625 (HEGEAKGEKVVD) has biased composition (basic and acidic residues). Acidic residues predominate over residues 626–636 (ADFEEVKEDKK).

The protein belongs to the heat shock protein 70 family.

Functionally, acts as a chaperone. The chain is Chaperone protein DnaK from Geotalea daltonii (strain DSM 22248 / JCM 15807 / FRC-32) (Geobacter daltonii).